Consider the following 291-residue polypeptide: ATP synthase gamma chain (291 aa).

It belongs to the ATPase gamma chain family. As to quaternary structure, F-type ATPases have 2 components, CF(1) - the catalytic core - and CF(0) - the membrane proton channel. CF(1) has five subunits: alpha(3), beta(3), gamma(1), delta(1), epsilon(1). CF(0) has three main subunits: a, b and c.

The protein localises to the cell inner membrane. Produces ATP from ADP in the presence of a proton gradient across the membrane. The gamma chain is believed to be important in regulating ATPase activity and the flow of protons through the CF(0) complex. This chain is ATP synthase gamma chain, found in Methylibium petroleiphilum (strain ATCC BAA-1232 / LMG 22953 / PM1).